Reading from the N-terminus, the 483-residue chain is Phosphoenolpyruvate carboxylase (483 aa).

The disordered stretch occupies residues 1-20 (MKVPRCMSTQHPDNVNPPFF).

Belongs to the PEPCase type 2 family. In terms of assembly, homotetramer. Mg(2+) is required as a cofactor.

It carries out the reaction oxaloacetate + phosphate = phosphoenolpyruvate + hydrogencarbonate. Its activity is regulated as follows. Inhibited by NaCl, KCl, ATP, ADP, GTP and aspartate. Unlike E.coli, not regulated by acetyl-CoA. Catalyzes the irreversible beta-carboxylation of phosphoenolpyruvate (PEP) to form oxaloacetate (OAA), a four-carbon dicarboxylic acid source for the tricarboxylic acid cycle. This Methanothermobacter thermautotrophicus (strain ATCC 29096 / DSM 1053 / JCM 10044 / NBRC 100330 / Delta H) (Methanobacterium thermoautotrophicum) protein is Phosphoenolpyruvate carboxylase (ppcA).